Here is a 245-residue protein sequence, read N- to C-terminus: MRQRRSVVAVSVKPKGFKLGHKQGSMSTTSPPPSSPDGNVSTSGPSAIKLSKNWELPQRLKPGRKPKSKRGDASANNDGSSKIKKVQTSNQKDQMTTKDHENEGAKGHEGKSDDEGNGSGDENGVDSVEKRRRQNRDAQRAYRERRTTRIQVLEEKVEMLHNLVDDWQRKYKLLESEFSDTKENLQKSIALNNELQKALPLIVNTPFQQQPENPPDNPISILEMVENFKPIGAVSLKKGKLKAHC.

The disordered stretch occupies residues 1 to 144 (MRQRRSVVAV…NRDAQRAYRE (144 aa)). The span at 74–94 (SANNDGSSKIKKVQTSNQKDQ) shows a compositional bias: polar residues. 2 stretches are compositionally biased toward basic and acidic residues: residues 95–114 (MTTKDHENEGAKGHEGKSDD) and 135–144 (NRDAQRAYRE). The bZIP domain occupies 125-188 (VDSVEKRRRQ…SDTKENLQKS (64 aa)). A basic motif region spans residues 130–149 (KRRRQNRDAQRAYRERRTTR). The interval 153–181 (LEEKVEMLHNLVDDWQRKYKLLESEFSDT) is leucine-zipper.

Belongs to the bZIP family. YAP subfamily. As to quaternary structure, homodimer.

It is found in the nucleus. In terms of biological role, probable transcription activator linked to cell cycle that induces transcription activation of genes in the environmental stress response and metabolism control pathways, like the closely related YAP5. The polypeptide is AP-1-like transcription factor YAP7 (YAP7) (Saccharomyces cerevisiae (strain ATCC 204508 / S288c) (Baker's yeast)).